We begin with the raw amino-acid sequence, 359 residues long: tRNA-specific 2-thiouridylase MnmA (359 aa).

ATP-binding positions include 7–14 (AMSGGVDS) and methionine 33. The Nucleophile role is filled by cysteine 101. Cysteine 101 and cysteine 198 are disulfide-bonded. An ATP-binding site is contributed by glycine 125. Residues 148–150 (KDQ) are interaction with tRNA. Cysteine 198 acts as the Cysteine persulfide intermediate in catalysis.

It belongs to the MnmA/TRMU family.

The protein localises to the cytoplasm. The enzyme catalyses S-sulfanyl-L-cysteinyl-[protein] + uridine(34) in tRNA + AH2 + ATP = 2-thiouridine(34) in tRNA + L-cysteinyl-[protein] + A + AMP + diphosphate + H(+). Its function is as follows. Catalyzes the 2-thiolation of uridine at the wobble position (U34) of tRNA, leading to the formation of s(2)U34. This is tRNA-specific 2-thiouridylase MnmA from Chloroflexus aurantiacus (strain ATCC 29366 / DSM 635 / J-10-fl).